A 303-amino-acid polypeptide reads, in one-letter code: N-acetyl-D-glucosamine kinase (303 aa).

ATP contacts are provided by residues 4 to 11 (GFDIGGTK) and 133 to 140 (GVGGGLVL). Residues His-157, Cys-177, Cys-179, and Cys-184 each coordinate Zn(2+).

Belongs to the ROK (NagC/XylR) family. NagK subfamily.

The enzyme catalyses N-acetyl-D-glucosamine + ATP = N-acetyl-D-glucosamine 6-phosphate + ADP + H(+). Its pathway is cell wall biogenesis; peptidoglycan recycling. Its function is as follows. Catalyzes the phosphorylation of N-acetyl-D-glucosamine (GlcNAc) derived from cell-wall degradation, yielding GlcNAc-6-P. This is N-acetyl-D-glucosamine kinase from Salmonella agona (strain SL483).